The sequence spans 286 residues: Cysteine-rich repeat secretory protein 57 (286 aa).

Residues 1–20 (METTKKLSVLLCLFFTMNQA) form the signal peptide. At 21-265 (ISESDSDEHM…PSRSGSFSIR (245 aa)) the chain is on the extracellular side. Gnk2-homologous domains follow at residues 29–131 (HMAT…DKFF) and 137–247 (TKPN…TSNS). N-linked (GlcNAc...) asparagine glycans are attached at residues Asn-35, Asn-40, Asn-44, Asn-60, Asn-69, Asn-90, Asn-100, Asn-108, Asn-209, and Asn-246. A helical transmembrane segment spans residues 266–284 (GNNKILVGMILAVSVFAFL). Over 285–286 (GL) the chain is Cytoplasmic.

It belongs to the cysteine-rich repeat secretory protein family.

It localises to the membrane. The polypeptide is Cysteine-rich repeat secretory protein 57 (CRRSP57) (Arabidopsis thaliana (Mouse-ear cress)).